The following is a 119-amino-acid chain: Large ribosomal subunit protein uL18 (119 aa).

It belongs to the universal ribosomal protein uL18 family. In terms of assembly, part of the 50S ribosomal subunit; part of the 5S rRNA/L5/L18/L25 subcomplex. Contacts the 5S and 23S rRNAs.

This is one of the proteins that bind and probably mediate the attachment of the 5S RNA into the large ribosomal subunit, where it forms part of the central protuberance. This is Large ribosomal subunit protein uL18 from Clostridium botulinum (strain Loch Maree / Type A3).